The sequence spans 607 residues: Elongation factor 4 (607 aa).

A tr-type G domain is found at 11–193 (EKIRNFSIIA…QIVEKVPAPT (183 aa)). Residues 23-28 (DHGKST) and 140-143 (NKID) each bind GTP.

The protein belongs to the TRAFAC class translation factor GTPase superfamily. Classic translation factor GTPase family. LepA subfamily.

The protein localises to the cell membrane. It carries out the reaction GTP + H2O = GDP + phosphate + H(+). Functionally, required for accurate and efficient protein synthesis under certain stress conditions. May act as a fidelity factor of the translation reaction, by catalyzing a one-codon backward translocation of tRNAs on improperly translocated ribosomes. Back-translocation proceeds from a post-translocation (POST) complex to a pre-translocation (PRE) complex, thus giving elongation factor G a second chance to translocate the tRNAs correctly. Binds to ribosomes in a GTP-dependent manner. The sequence is that of Elongation factor 4 from Streptococcus pneumoniae (strain P1031).